Here is a 525-residue protein sequence, read N- to C-terminus: Bifunctional pantoate ligase/cytidylate kinase (525 aa).

The tract at residues 1–292 (MDNVPIIRTV…VGSARLIDNM (292 aa)) is pantoate--beta-alanine ligase. 44–51 (MGALHAGH) is an ATP binding site. The active-site Proton donor is His51. Gln75 provides a ligand contact to (R)-pantoate. Residue Gln75 participates in beta-alanine binding. 162–165 (GQKD) serves as a coordination point for ATP. Gln168 is a binding site for (R)-pantoate. ATP contacts are provided by residues Ile191 and 199-202 (LSSR). A cytidylate kinase region spans residues 293–525 (LLDARLPILA…LYQERFPDRA (233 aa)).

It in the N-terminal section; belongs to the pantothenate synthetase family. In the C-terminal section; belongs to the cytidylate kinase family. Type 1 subfamily.

The protein localises to the cytoplasm. It catalyses the reaction (R)-pantoate + beta-alanine + ATP = (R)-pantothenate + AMP + diphosphate + H(+). The enzyme catalyses CMP + ATP = CDP + ADP. It carries out the reaction dCMP + ATP = dCDP + ADP. It functions in the pathway cofactor biosynthesis; (R)-pantothenate biosynthesis; (R)-pantothenate from (R)-pantoate and beta-alanine: step 1/1. Functionally, catalyzes the condensation of pantoate with beta-alanine in an ATP-dependent reaction via a pantoyl-adenylate intermediate. In terms of biological role, catalyzes the transfer of a phosphate group from ATP to either CMP or dCMP to form CDP or dCDP and ADP, respectively. The protein is Bifunctional pantoate ligase/cytidylate kinase of Acaryochloris marina (strain MBIC 11017).